Consider the following 250-residue polypeptide: 5-oxoprolinase subunit A (250 aa).

It belongs to the LamB/PxpA family. In terms of assembly, forms a complex composed of PxpA, PxpB and PxpC.

It catalyses the reaction 5-oxo-L-proline + ATP + 2 H2O = L-glutamate + ADP + phosphate + H(+). Catalyzes the cleavage of 5-oxoproline to form L-glutamate coupled to the hydrolysis of ATP to ADP and inorganic phosphate. This is 5-oxoprolinase subunit A from Klebsiella pneumoniae (strain 342).